The sequence spans 285 residues: Probable endonuclease 4 (285 aa).

Positions 69, 109, 145, 179, 182, 216, 229, 231, and 261 each coordinate Zn(2+).

Belongs to the AP endonuclease 2 family. Zn(2+) serves as cofactor.

It carries out the reaction Endonucleolytic cleavage to 5'-phosphooligonucleotide end-products.. Its function is as follows. Endonuclease IV plays a role in DNA repair. It cleaves phosphodiester bonds at apurinic or apyrimidinic (AP) sites, generating a 3'-hydroxyl group and a 5'-terminal sugar phosphate. The sequence is that of Probable endonuclease 4 from Shigella boydii serotype 18 (strain CDC 3083-94 / BS512).